The following is a 390-amino-acid chain: Succinyl-diaminopimelate desuccinylase (390 aa).

H74 contributes to the Zn(2+) binding site. D76 is a catalytic residue. D107 serves as a coordination point for Zn(2+). E140 acts as the Proton acceptor in catalysis. Zn(2+)-binding residues include E141, E169, and H363.

The protein belongs to the peptidase M20A family. DapE subfamily. Homodimer. Zn(2+) serves as cofactor. Requires Co(2+) as cofactor.

The catalysed reaction is N-succinyl-(2S,6S)-2,6-diaminopimelate + H2O = (2S,6S)-2,6-diaminopimelate + succinate. It functions in the pathway amino-acid biosynthesis; L-lysine biosynthesis via DAP pathway; LL-2,6-diaminopimelate from (S)-tetrahydrodipicolinate (succinylase route): step 3/3. Its function is as follows. Catalyzes the hydrolysis of N-succinyl-L,L-diaminopimelic acid (SDAP), forming succinate and LL-2,6-diaminopimelate (DAP), an intermediate involved in the bacterial biosynthesis of lysine and meso-diaminopimelic acid, an essential component of bacterial cell walls. This Bartonella henselae (strain ATCC 49882 / DSM 28221 / CCUG 30454 / Houston 1) (Rochalimaea henselae) protein is Succinyl-diaminopimelate desuccinylase.